Here is a 411-residue protein sequence, read N- to C-terminus: CCA-adding enzyme (411 aa).

Positions 8 and 11 each coordinate ATP. Residues G8 and R11 each contribute to the CTP site. Mg(2+)-binding residues include E21 and D23. ATP contacts are provided by R91, R137, and R140. 3 residues coordinate CTP: R91, R137, and R140. The HD domain maps to 227–328; the sequence is LGNQTMTRLS…MTIFQAFDCW (102 aa).

This sequence belongs to the tRNA nucleotidyltransferase/poly(A) polymerase family. Bacterial CCA-adding enzyme type 2 subfamily. Mg(2+) is required as a cofactor.

The enzyme catalyses a tRNA precursor + 2 CTP + ATP = a tRNA with a 3' CCA end + 3 diphosphate. It catalyses the reaction a tRNA with a 3' CCA end + 2 CTP + ATP = a tRNA with a 3' CCACCA end + 3 diphosphate. Its function is as follows. Catalyzes the addition and repair of the essential 3'-terminal CCA sequence in tRNAs without using a nucleic acid template. Adds these three nucleotides in the order of C, C, and A to the tRNA nucleotide-73, using CTP and ATP as substrates and producing inorganic pyrophosphate. tRNA 3'-terminal CCA addition is required both for tRNA processing and repair. Also involved in tRNA surveillance by mediating tandem CCA addition to generate a CCACCA at the 3' terminus of unstable tRNAs. While stable tRNAs receive only 3'-terminal CCA, unstable tRNAs are marked with CCACCA and rapidly degraded. This chain is CCA-adding enzyme, found in Blochmanniella floridana.